Reading from the N-terminus, the 269-residue chain is Formamidopyrimidine-DNA glycosylase (269 aa).

Catalysis depends on proline 2, which acts as the Schiff-base intermediate with DNA. Catalysis depends on glutamate 3, which acts as the Proton donor. The Proton donor; for beta-elimination activity role is filled by lysine 57. Residues histidine 90, arginine 109, and lysine 150 each coordinate DNA. The FPG-type zinc finger occupies 235-269; sequence QVYGREGEPCRVCGTPILAGKHAQRRTYWCRRCQK. Residue arginine 259 is the Proton donor; for delta-elimination activity of the active site.

This sequence belongs to the FPG family. Monomer. Zn(2+) serves as cofactor.

It carries out the reaction Hydrolysis of DNA containing ring-opened 7-methylguanine residues, releasing 2,6-diamino-4-hydroxy-5-(N-methyl)formamidopyrimidine.. It catalyses the reaction 2'-deoxyribonucleotide-(2'-deoxyribose 5'-phosphate)-2'-deoxyribonucleotide-DNA = a 3'-end 2'-deoxyribonucleotide-(2,3-dehydro-2,3-deoxyribose 5'-phosphate)-DNA + a 5'-end 5'-phospho-2'-deoxyribonucleoside-DNA + H(+). Functionally, involved in base excision repair of DNA damaged by oxidation or by mutagenic agents. Acts as a DNA glycosylase that recognizes and removes damaged bases. Has a preference for oxidized purines, such as 7,8-dihydro-8-oxoguanine (8-oxoG). Has AP (apurinic/apyrimidinic) lyase activity and introduces nicks in the DNA strand. Cleaves the DNA backbone by beta-delta elimination to generate a single-strand break at the site of the removed base with both 3'- and 5'-phosphates. This Cronobacter sakazakii (strain ATCC BAA-894) (Enterobacter sakazakii) protein is Formamidopyrimidine-DNA glycosylase.